We begin with the raw amino-acid sequence, 347 residues long: NADH-ubiquinone oxidoreductase chain 2 (347 aa).

11 helical membrane passes run 3–23 (PIIL…VMIS), 25–45 (HWLL…PIMM), 67–87 (SMLL…WTVM), 96–116 (MLMT…FWVP), 122–142 (IPLS…MSVL), 145–165 (ILPS…ITIG), 178–198 (IMAY…LYNP), 200–220 (MTLL…TLFM), 237–257 (APIM…LPPL), 274–294 (DSII…YFYM), and 325–345 (LLPT…ILSI).

It belongs to the complex I subunit 2 family. In terms of assembly, core subunit of respiratory chain NADH dehydrogenase (Complex I) which is composed of 45 different subunits. Interacts with TMEM242.

It localises to the mitochondrion inner membrane. It catalyses the reaction a ubiquinone + NADH + 5 H(+)(in) = a ubiquinol + NAD(+) + 4 H(+)(out). Its function is as follows. Core subunit of the mitochondrial membrane respiratory chain NADH dehydrogenase (Complex I) which catalyzes electron transfer from NADH through the respiratory chain, using ubiquinone as an electron acceptor. Essential for the catalytic activity and assembly of complex I. The protein is NADH-ubiquinone oxidoreductase chain 2 of Ovis aries (Sheep).